The primary structure comprises 121 residues: Ribosome-binding factor A (121 aa).

The protein belongs to the RbfA family. Monomer. Binds 30S ribosomal subunits, but not 50S ribosomal subunits or 70S ribosomes.

The protein resides in the cytoplasm. In terms of biological role, one of several proteins that assist in the late maturation steps of the functional core of the 30S ribosomal subunit. Associates with free 30S ribosomal subunits (but not with 30S subunits that are part of 70S ribosomes or polysomes). Required for efficient processing of 16S rRNA. May interact with the 5'-terminal helix region of 16S rRNA. This is Ribosome-binding factor A from Clostridium novyi (strain NT).